We begin with the raw amino-acid sequence, 326 residues long: 4-hydroxy-3-methylbut-2-enyl diphosphate reductase (326 aa).

A [4Fe-4S] cluster-binding site is contributed by Cys-22. (2E)-4-hydroxy-3-methylbut-2-enyl diphosphate contacts are provided by His-51 and His-84. Dimethylallyl diphosphate is bound by residues His-51 and His-84. 2 residues coordinate isopentenyl diphosphate: His-51 and His-84. Cys-106 is a [4Fe-4S] cluster binding site. Residue His-134 coordinates (2E)-4-hydroxy-3-methylbut-2-enyl diphosphate. Position 134 (His-134) interacts with dimethylallyl diphosphate. Position 134 (His-134) interacts with isopentenyl diphosphate. Catalysis depends on Glu-136, which acts as the Proton donor. Thr-174 is a (2E)-4-hydroxy-3-methylbut-2-enyl diphosphate binding site. A [4Fe-4S] cluster-binding site is contributed by Cys-204. 4 residues coordinate (2E)-4-hydroxy-3-methylbut-2-enyl diphosphate: Ser-232, Ser-233, Asn-234, and Ser-276. The dimethylallyl diphosphate site is built by Ser-232, Ser-233, Asn-234, and Ser-276. The isopentenyl diphosphate site is built by Ser-232, Ser-233, Asn-234, and Ser-276.

The protein belongs to the IspH family. [4Fe-4S] cluster is required as a cofactor.

It carries out the reaction isopentenyl diphosphate + 2 oxidized [2Fe-2S]-[ferredoxin] + H2O = (2E)-4-hydroxy-3-methylbut-2-enyl diphosphate + 2 reduced [2Fe-2S]-[ferredoxin] + 2 H(+). It catalyses the reaction dimethylallyl diphosphate + 2 oxidized [2Fe-2S]-[ferredoxin] + H2O = (2E)-4-hydroxy-3-methylbut-2-enyl diphosphate + 2 reduced [2Fe-2S]-[ferredoxin] + 2 H(+). The protein operates within isoprenoid biosynthesis; dimethylallyl diphosphate biosynthesis; dimethylallyl diphosphate from (2E)-4-hydroxy-3-methylbutenyl diphosphate: step 1/1. It participates in isoprenoid biosynthesis; isopentenyl diphosphate biosynthesis via DXP pathway; isopentenyl diphosphate from 1-deoxy-D-xylulose 5-phosphate: step 6/6. In terms of biological role, catalyzes the conversion of 1-hydroxy-2-methyl-2-(E)-butenyl 4-diphosphate (HMBPP) into a mixture of isopentenyl diphosphate (IPP) and dimethylallyl diphosphate (DMAPP). Acts in the terminal step of the DOXP/MEP pathway for isoprenoid precursor biosynthesis. The chain is 4-hydroxy-3-methylbut-2-enyl diphosphate reductase from Bordetella parapertussis (strain 12822 / ATCC BAA-587 / NCTC 13253).